Reading from the N-terminus, the 166-residue chain is Ureidoglycolate lyase (166 aa).

This sequence belongs to the ureidoglycolate lyase family. In terms of assembly, homodimer. The cofactor is Ni(2+).

The catalysed reaction is (S)-ureidoglycolate = urea + glyoxylate. The protein operates within nitrogen metabolism; (S)-allantoin degradation. Its function is as follows. Catalyzes the catabolism of the allantoin degradation intermediate (S)-ureidoglycolate, generating urea and glyoxylate. Involved in the utilization of allantoin as nitrogen source. The sequence is that of Ureidoglycolate lyase from Azotobacter vinelandii (strain DJ / ATCC BAA-1303).